The sequence spans 222 residues: N-(5'-phosphoribosyl)anthranilate isomerase (222 aa).

This sequence belongs to the TrpF family.

The catalysed reaction is N-(5-phospho-beta-D-ribosyl)anthranilate = 1-(2-carboxyphenylamino)-1-deoxy-D-ribulose 5-phosphate. It functions in the pathway amino-acid biosynthesis; L-tryptophan biosynthesis; L-tryptophan from chorismate: step 3/5. The chain is N-(5'-phosphoribosyl)anthranilate isomerase from Rhizobium rhizogenes (strain K84 / ATCC BAA-868) (Agrobacterium radiobacter).